Reading from the N-terminus, the 803-residue chain is Translation initiation factor IF-2 (803 aa).

Disordered regions lie at residues 95-125 and 138-209; these read PVVE…EKAE and EVKE…KLEQ. The span at 111–121 shows a compositional bias: polar residues; the sequence is VPLTSDTTNLN. Positions 138–155 are enriched in basic and acidic residues; that stretch reads EVKEEAKKTPSEKKETPK. A compositionally biased stretch (basic residues) spans 156–167; that stretch reads KGPRKETRRSRK. Residues 168 to 188 are compositionally biased toward basic and acidic residues; it reads PDKEDKWEREELHMTKLVEER. The tr-type G domain occupies 302–471; sequence PRAPVVTIMG…LLQAEVLELK (170 aa). The tract at residues 311 to 318 is G1; that stretch reads GHVDHGKT. 311–318 provides a ligand contact to GTP; it reads GHVDHGKT. The tract at residues 336–340 is G2; the sequence is GITQH. Positions 357 to 360 are G3; that stretch reads DTPG. Residues 357–361 and 411–414 each bind GTP; these read DTPGH and NKID. The tract at residues 411–414 is G4; that stretch reads NKID. The G5 stretch occupies residues 447 to 449; the sequence is SAK.

This sequence belongs to the TRAFAC class translation factor GTPase superfamily. Classic translation factor GTPase family. IF-2 subfamily.

Its subcellular location is the cytoplasm. One of the essential components for the initiation of protein synthesis. Protects formylmethionyl-tRNA from spontaneous hydrolysis and promotes its binding to the 30S ribosomal subunits. Also involved in the hydrolysis of GTP during the formation of the 70S ribosomal complex. The sequence is that of Translation initiation factor IF-2 from Coxiella burnetii (strain CbuG_Q212) (Coxiella burnetii (strain Q212)).